Consider the following 393-residue polypeptide: NAD(P)H-quinone oxidoreductase subunit H, chloroplastic (393 aa).

Belongs to the complex I 49 kDa subunit family. As to quaternary structure, NDH is composed of at least 16 different subunits, 5 of which are encoded in the nucleus.

It localises to the plastid. The protein localises to the chloroplast thylakoid membrane. It catalyses the reaction a plastoquinone + NADH + (n+1) H(+)(in) = a plastoquinol + NAD(+) + n H(+)(out). It carries out the reaction a plastoquinone + NADPH + (n+1) H(+)(in) = a plastoquinol + NADP(+) + n H(+)(out). Functionally, NDH shuttles electrons from NAD(P)H:plastoquinone, via FMN and iron-sulfur (Fe-S) centers, to quinones in the photosynthetic chain and possibly in a chloroplast respiratory chain. The immediate electron acceptor for the enzyme in this species is believed to be plastoquinone. Couples the redox reaction to proton translocation, and thus conserves the redox energy in a proton gradient. The protein is NAD(P)H-quinone oxidoreductase subunit H, chloroplastic of Liriodendron tulipifera (Tuliptree).